A 244-amino-acid polypeptide reads, in one-letter code: Probable transcriptional regulatory protein Aasi_0624 (244 aa).

The protein belongs to the TACO1 family.

It is found in the cytoplasm. This is Probable transcriptional regulatory protein Aasi_0624 from Amoebophilus asiaticus (strain 5a2).